The primary structure comprises 213 residues: Redox-sensing transcriptional repressor Rex (213 aa).

The H-T-H motif DNA-binding region spans 17–56; the sequence is LYYRIFKRFHSENIEKASSKQIAEAIGIDSATVRRDFSYF. Residue 91-96 participates in NAD(+) binding; it reads GVGNIG.

It belongs to the transcriptional regulatory Rex family. In terms of assembly, homodimer.

The protein resides in the cytoplasm. Functionally, modulates transcription in response to changes in cellular NADH/NAD(+) redox state. This Streptococcus mutans serotype c (strain ATCC 700610 / UA159) protein is Redox-sensing transcriptional repressor Rex.